A 112-amino-acid polypeptide reads, in one-letter code: uncharacterized protein (112 aa).

The N-terminal stretch at 1–21 is a signal peptide; the sequence is MKTLFTSVVLCGALVVSSSFA. HhH domains follow at residues 49 to 79 and 80 to 109; these read DKLN…IVQY and REKH…NRDR.

This is an uncharacterized protein from Haemophilus influenzae (strain ATCC 51907 / DSM 11121 / KW20 / Rd).